The chain runs to 1088 residues: Adenylate-forming reductase Nps10 (1088 aa).

Residues 1 to 22 (MSSVSIQIPLPTPPPTQAHNSQ) form a disordered region. Residues 38-451 (FDWHSKNSPN…KIFGRTDDQI (414 aa)) form an adenylation (A) domain region. AMP-binding positions include H261, 357–358 (NL), T362, and 443–446 (IFGR). The region spanning 586-668 (AWDSAKTLGF…SLASFVSSVA (83 aa)) is the Carrier domain. S621 is subject to O-(pantetheine 4'-phosphoryl)serine. Positions 712 to 951 (LTGSTGALGS…IPVNVAAAAI (240 aa)) are reductase (R) domain. NADP(+)-binding positions include 716–719 (TGAL), 804–806 (NAW), Y875, and K879.

Belongs to the adenylate-forming reductase family.

Functionally, adenylate-forming reductase, a natural product biosynthesis enzyme that resembles non-ribosomal peptide synthetases, yet serves to modify one substrate, rather than to condense two or more building blocks. The A-domain preferentially accepts phenylpyruvic acid and benzoic acid as substrate. The natural product of the enzyme is not yet known. This is Adenylate-forming reductase Nps10 from Heterobasidion annosum (Root rot fungus).